The sequence spans 120 residues: Fluoride-specific ion channel FluC (120 aa).

Helical transmembrane passes span 30-50 (FGTLAVNILGSLLMGILYGLL), 66-86 (VGFLGALTTFSTFSMDSLLLL), and 96-116 (LNIILNVMVCIFMAWLGLQLV). G70 and T73 together coordinate Na(+).

This sequence belongs to the fluoride channel Fluc/FEX (TC 1.A.43) family.

It is found in the cell inner membrane. The catalysed reaction is fluoride(in) = fluoride(out). Its activity is regulated as follows. Na(+) is not transported, but it plays an essential structural role and its presence is essential for fluoride channel function. Functionally, fluoride-specific ion channel. Important for reducing fluoride concentration in the cell, thus reducing its toxicity. This chain is Fluoride-specific ion channel FluC, found in Pseudoalteromonas translucida (strain TAC 125).